A 307-amino-acid polypeptide reads, in one-letter code: UDP-N-acetylenolpyruvoylglucosamine reductase (307 aa).

Residues 33–197 (TGGNADFYIT…LEAAFTLAPG (165 aa)) enclose the FAD-binding PCMH-type domain. Arg-176 is an active-site residue. Residue Ser-226 is the Proton donor of the active site. The active site involves Glu-296.

The protein belongs to the MurB family. FAD is required as a cofactor.

It localises to the cytoplasm. The catalysed reaction is UDP-N-acetyl-alpha-D-muramate + NADP(+) = UDP-N-acetyl-3-O-(1-carboxyvinyl)-alpha-D-glucosamine + NADPH + H(+). Its pathway is cell wall biogenesis; peptidoglycan biosynthesis. Functionally, cell wall formation. In Staphylococcus aureus (strain Mu3 / ATCC 700698), this protein is UDP-N-acetylenolpyruvoylglucosamine reductase.